The chain runs to 285 residues: Bifunctional protein FolD (285 aa).

NADP(+) is bound by residues 166–168 (GAS) and Ile-232.

The protein belongs to the tetrahydrofolate dehydrogenase/cyclohydrolase family. Homodimer.

The catalysed reaction is (6R)-5,10-methylene-5,6,7,8-tetrahydrofolate + NADP(+) = (6R)-5,10-methenyltetrahydrofolate + NADPH. The enzyme catalyses (6R)-5,10-methenyltetrahydrofolate + H2O = (6R)-10-formyltetrahydrofolate + H(+). Its pathway is one-carbon metabolism; tetrahydrofolate interconversion. Its function is as follows. Catalyzes the oxidation of 5,10-methylenetetrahydrofolate to 5,10-methenyltetrahydrofolate and then the hydrolysis of 5,10-methenyltetrahydrofolate to 10-formyltetrahydrofolate. This is Bifunctional protein FolD from Psychromonas ingrahamii (strain DSM 17664 / CCUG 51855 / 37).